The following is a 480-amino-acid chain: Probable cobyric acid synthase (480 aa).

The 186-residue stretch at 246-431 (PVRIAVIRLP…MHGLFLNPSA (186 aa)) folds into the GATase cobBQ-type domain. Cys325 serves as the catalytic Nucleophile. His423 is an active-site residue.

It belongs to the CobB/CobQ family. CobQ subfamily.

The protein operates within cofactor biosynthesis; adenosylcobalamin biosynthesis. Functionally, catalyzes amidations at positions B, D, E, and G on adenosylcobyrinic A,C-diamide. NH(2) groups are provided by glutamine, and one molecule of ATP is hydrogenolyzed for each amidation. This chain is Probable cobyric acid synthase, found in Methanoregula boonei (strain DSM 21154 / JCM 14090 / 6A8).